The chain runs to 552 residues: Arginine--tRNA ligase (552 aa).

Positions 130–140 (ANPTGPIHLGG) match the 'HIGH' region motif.

It belongs to the class-I aminoacyl-tRNA synthetase family. Monomer.

It localises to the cytoplasm. It carries out the reaction tRNA(Arg) + L-arginine + ATP = L-arginyl-tRNA(Arg) + AMP + diphosphate. The polypeptide is Arginine--tRNA ligase (Nocardia farcinica (strain IFM 10152)).